Consider the following 309-residue polypeptide: Gamma-hemolysin component A (309 aa).

The signal sequence occupies residues 1 to 29 (MIKNKILTATLAVGLIAPLANPFIEISKA).

The protein belongs to the aerolysin family. As to quaternary structure, toxicity requires sequential binding and synergistic association of a class S and a class F component which form heterooligomeric complexes. HlgA (class S) associates with HlgB (class F) thus forming an AB toxin in strains producing both gamma-hemolysins and leukocidins. HlgA and LukF-PV can also form a complex.

The protein localises to the secreted. In terms of biological role, toxin that seems to act by forming pores in the membrane of the cell. Has a hemolytic and a leucotoxic activity. The sequence is that of Gamma-hemolysin component A (hlgA) from Staphylococcus aureus (strain MRSA252).